The following is a 503-amino-acid chain: Ribose import ATP-binding protein RbsA (503 aa).

2 consecutive ABC transporter domains span residues 10 to 246 and 256 to 500; these read LEVR…VGRD and VEPG…TGSE. 42 to 49 contributes to the ATP binding site; sequence GENGAGKS.

It belongs to the ABC transporter superfamily. Ribose importer (TC 3.A.1.2.1) family. In terms of assembly, the complex is composed of an ATP-binding protein (RbsA), two transmembrane proteins (RbsC) and a solute-binding protein (RbsB).

The protein resides in the cell membrane. The enzyme catalyses D-ribose(out) + ATP + H2O = D-ribose(in) + ADP + phosphate + H(+). Its function is as follows. Part of the ABC transporter complex RbsABC involved in ribose import. Responsible for energy coupling to the transport system. The sequence is that of Ribose import ATP-binding protein RbsA from Rhodococcus jostii (strain RHA1).